Reading from the N-terminus, the 482-residue chain is Bifunctional protein GlmU (482 aa).

The tract at residues 1 to 238 (MSATSPAAVV…HREILGINNR (238 aa)) is pyrophosphorylase. Residues 12-15 (LAAG), Lys26, Gln79, and 84-85 (GT) contribute to the UDP-N-acetyl-alpha-D-glucosamine site. Asp110 lines the Mg(2+) pocket. Gly147, Glu163, Asn178, and Asn236 together coordinate UDP-N-acetyl-alpha-D-glucosamine. Asn236 lines the Mg(2+) pocket. The interval 239-259 (LQLAEARRLLNERLLERAMLA) is linker. The interval 260–482 (GVTVVDPAST…ASSQETDGQS (223 aa)) is N-acetyltransferase. UDP-N-acetyl-alpha-D-glucosamine is bound by residues Arg341 and Lys359. The active-site Proton acceptor is the His371. UDP-N-acetyl-alpha-D-glucosamine is bound by residues Tyr374 and Asn385. Residues Ala388, 394 to 395 (NY), Ser413, Ala431, and Arg448 each bind acetyl-CoA. The interval 458-482 (VARKRPGSAAAQAAQASSQETDGQS) is disordered. Residues 465-476 (SAAAQAAQASSQ) are compositionally biased toward low complexity.

The protein in the N-terminal section; belongs to the N-acetylglucosamine-1-phosphate uridyltransferase family. This sequence in the C-terminal section; belongs to the transferase hexapeptide repeat family. Homotrimer. The cofactor is Mg(2+).

Its subcellular location is the cytoplasm. It catalyses the reaction alpha-D-glucosamine 1-phosphate + acetyl-CoA = N-acetyl-alpha-D-glucosamine 1-phosphate + CoA + H(+). The catalysed reaction is N-acetyl-alpha-D-glucosamine 1-phosphate + UTP + H(+) = UDP-N-acetyl-alpha-D-glucosamine + diphosphate. Its pathway is nucleotide-sugar biosynthesis; UDP-N-acetyl-alpha-D-glucosamine biosynthesis; N-acetyl-alpha-D-glucosamine 1-phosphate from alpha-D-glucosamine 6-phosphate (route II): step 2/2. It functions in the pathway nucleotide-sugar biosynthesis; UDP-N-acetyl-alpha-D-glucosamine biosynthesis; UDP-N-acetyl-alpha-D-glucosamine from N-acetyl-alpha-D-glucosamine 1-phosphate: step 1/1. It participates in bacterial outer membrane biogenesis; LPS lipid A biosynthesis. In terms of biological role, catalyzes the last two sequential reactions in the de novo biosynthetic pathway for UDP-N-acetylglucosamine (UDP-GlcNAc). The C-terminal domain catalyzes the transfer of acetyl group from acetyl coenzyme A to glucosamine-1-phosphate (GlcN-1-P) to produce N-acetylglucosamine-1-phosphate (GlcNAc-1-P), which is converted into UDP-GlcNAc by the transfer of uridine 5-monophosphate (from uridine 5-triphosphate), a reaction catalyzed by the N-terminal domain. This is Bifunctional protein GlmU from Streptomyces griseus subsp. griseus (strain JCM 4626 / CBS 651.72 / NBRC 13350 / KCC S-0626 / ISP 5235).